Here is a 286-residue protein sequence, read N- to C-terminus: Energy-coupling factor transporter ATP-binding protein EcfA2 (286 aa).

Positions 3 to 246 constitute an ABC transporter domain; it reads IRFDNVSYTY…KKKLADWHIG (244 aa). Residue 40–47 coordinates ATP; that stretch reads GQTGSGKS.

This sequence belongs to the ABC transporter superfamily. Energy-coupling factor EcfA family. Forms a stable energy-coupling factor (ECF) transporter complex composed of 2 membrane-embedded substrate-binding proteins (S component), 2 ATP-binding proteins (A component) and 2 transmembrane proteins (T component).

The protein localises to the cell membrane. In terms of biological role, ATP-binding (A) component of a common energy-coupling factor (ECF) ABC-transporter complex. Unlike classic ABC transporters this ECF transporter provides the energy necessary to transport a number of different substrates. The sequence is that of Energy-coupling factor transporter ATP-binding protein EcfA2 from Staphylococcus aureus (strain USA300).